The primary structure comprises 90 residues: Large ribosomal subunit protein bL27 (90 aa).

A disordered region spans residues 1-21; the sequence is MASKKAGGSTRNGRDSEAKRL.

The protein belongs to the bacterial ribosomal protein bL27 family.

This chain is Large ribosomal subunit protein bL27, found in Neisseria gonorrhoeae (strain ATCC 700825 / FA 1090).